The following is a 115-amino-acid chain: T cell receptor beta variable 11-2 (115 aa).

The N-terminal stretch at 1–21 (MGTRLLCWAALCLLGAELTEA) is a signal peptide. In terms of domain architecture, Ig-like spans 22–115 (GVAQSPRYKI…SAVYLCASSL (94 aa)). A disulfide bond links C42 and C111.

As to quaternary structure, alpha-beta TR is a heterodimer composed of an alpha and beta chain; disulfide-linked. The alpha-beta TR is associated with the transmembrane signaling CD3 coreceptor proteins to form the TR-CD3 (TcR or TCR). The assembly of alpha-beta TR heterodimers with CD3 occurs in the endoplasmic reticulum where a single alpha-beta TR heterodimer associates with one CD3D-CD3E heterodimer, one CD3G-CD3E heterodimer and one CD247 homodimer forming a stable octameric structure. CD3D-CD3E and CD3G-CD3E heterodimers preferentially associate with TR alpha and TR beta chains, respectively. The association of the CD247 homodimer is the last step of TcR assembly in the endoplasmic reticulum and is required for transport to the cell surface.

It is found in the cell membrane. In terms of biological role, v region of the variable domain of T cell receptor (TR) beta chain that participates in the antigen recognition. Alpha-beta T cell receptors are antigen specific receptors which are essential to the immune response and are present on the cell surface of T lymphocytes. Recognize peptide-major histocompatibility (MH) (pMH) complexes that are displayed by antigen presenting cells (APC), a prerequisite for efficient T cell adaptive immunity against pathogens. Binding of alpha-beta TR to pMH complex initiates TR-CD3 clustering on the cell surface and intracellular activation of LCK that phosphorylates the ITAM motifs of CD3G, CD3D, CD3E and CD247 enabling the recruitment of ZAP70. In turn ZAP70 phosphorylates LAT, which recruits numerous signaling molecules to form the LAT signalosome. The LAT signalosome propagates signal branching to three major signaling pathways, the calcium, the mitogen-activated protein kinase (MAPK) kinase and the nuclear factor NF-kappa-B (NF-kB) pathways, leading to the mobilization of transcription factors that are critical for gene expression and essential for T cell growth and differentiation. The T cell repertoire is generated in the thymus, by V-(D)-J rearrangement. This repertoire is then shaped by intrathymic selection events to generate a peripheral T cell pool of self-MH restricted, non-autoaggressive T cells. Post-thymic interaction of alpha-beta TR with the pMH complexes shapes TR structural and functional avidity. This chain is T cell receptor beta variable 11-2, found in Homo sapiens (Human).